The chain runs to 263 residues: Zinc import ATP-binding protein ZnuC (263 aa).

In terms of domain architecture, ABC transporter spans 11-226 (VELKNINVVF…PTFIHFFGDQ (216 aa)). 43–50 (GPNGGGKS) provides a ligand contact to ATP.

This sequence belongs to the ABC transporter superfamily. Zinc importer (TC 3.A.1.15.5) family. In terms of assembly, the complex is composed of two ATP-binding proteins (ZnuC), two transmembrane proteins (ZnuB) and a solute-binding protein (ZnuA).

Its subcellular location is the cell inner membrane. It catalyses the reaction Zn(2+)(out) + ATP(in) + H2O(in) = Zn(2+)(in) + ADP(in) + phosphate(in) + H(+)(in). Its function is as follows. Part of the ABC transporter complex ZnuABC involved in zinc import. Responsible for energy coupling to the transport system. The polypeptide is Zinc import ATP-binding protein ZnuC (Pasteurella multocida (strain Pm70)).